The sequence spans 282 residues: Putative hydrolase Bamb_4846 (282 aa).

The Mg(2+) site is built by glutamate 124, glutamate 126, and aspartate 155.

Belongs to the FAH family. Mg(2+) serves as cofactor.

The polypeptide is Putative hydrolase Bamb_4846 (Burkholderia ambifaria (strain ATCC BAA-244 / DSM 16087 / CCUG 44356 / LMG 19182 / AMMD) (Burkholderia cepacia (strain AMMD))).